We begin with the raw amino-acid sequence, 542 residues long: Putative cysteine ligase BshC (542 aa).

Residues 458-479 are a coiled coil; that stretch reads LTKNATLLQAQIDFLHQTLQRA.

This sequence belongs to the BshC family.

Involved in bacillithiol (BSH) biosynthesis. May catalyze the last step of the pathway, the addition of cysteine to glucosamine malate (GlcN-Mal) to generate BSH. The polypeptide is Putative cysteine ligase BshC (Geobacillus sp. (strain WCH70)).